Reading from the N-terminus, the 529-residue chain is MLPVQILKDNAQEERGESARLSSFVGAIAIGDLVKSTLGPKGMDKILISGNPESAGGIKVTNDGATILKSIGVDNPAAKVLVDMSMTQDHEVGDGTTSVTVLAAELLKEAEKLVNQRIHPQTIISGYRRALGIAQESLKKSSIESGDNIRDDLLKIARTTLGSKILSQHKEHFAQLAVDAVLRLKGSGNLDAIQIIKKLGGSMNESYLDEGFLLEKLPGMFQPRRVEKAKILIANTPMDTDKVKVFGSRVRVDGVAKVAELEAAEKLKMKEKVDKILAHNCNVFINRQLIYNYPEQLFADAKVMAIEHADFEGIERLALVLGGEIVSTFDSPQTAQFGSCDLIEEIMIGEDRLLRFSGVKLGEACSVVLRGATQQILDESERSLHDALCVLVTHVKESKTVAGAGASEILMSSAIAVEAQKVAGKEALAVEAFGRALAQLPTIICDNAGLDSAELVTRLRAEHANGRHNMGIDIEKGEVADVTKLGVIESYNVKLCMVSSAAEATEQILRVDDIIKAAPRARAQDNRPC.

Belongs to the TCP-1 chaperonin family. As to quaternary structure, heterooligomeric complex of about 850 to 900 kDa that forms two stacked rings, 12 to 16 nm in diameter.

The protein resides in the cytoplasm. Molecular chaperone; assists the folding of proteins upon ATP hydrolysis. Known to play a role, in vitro, in the folding of actin and tubulin. In Caenorhabditis elegans, this protein is T-complex protein 1 subunit beta (cct-2).